The following is a 117-amino-acid chain: Large ribosomal subunit protein uL22 (117 aa).

The protein belongs to the universal ribosomal protein uL22 family. In terms of assembly, part of the 50S ribosomal subunit.

This protein binds specifically to 23S rRNA; its binding is stimulated by other ribosomal proteins, e.g. L4, L17, and L20. It is important during the early stages of 50S assembly. It makes multiple contacts with different domains of the 23S rRNA in the assembled 50S subunit and ribosome. Its function is as follows. The globular domain of the protein is located near the polypeptide exit tunnel on the outside of the subunit, while an extended beta-hairpin is found that lines the wall of the exit tunnel in the center of the 70S ribosome. This chain is Large ribosomal subunit protein uL22, found in Staphylococcus epidermidis (strain ATCC 35984 / DSM 28319 / BCRC 17069 / CCUG 31568 / BM 3577 / RP62A).